Consider the following 285-residue polypeptide: Anamorsin homolog 1 (285 aa).

Residues 1–150 (MEATVLLVTD…QKPTWETGSS (150 aa)) are N-terminal SAM-like domain. The linker stretch occupies residues 150-195 (SFSLKKKSVQKQESLPKPGALSVKPEMNVDLEDLIDEESLLSEEDL). The [2Fe-2S] cluster site is built by Cys206, Cys215, Cys218, and Cys220. Residues 206 to 220 (CEVSTKRKACKNCTC) form a fe-S binding site A region. Cys246, Cys249, Cys257, and Cys260 together coordinate [4Fe-4S] cluster. Short sequence motifs (cx2C motif) lie at residues 246–249 (CGNC) and 257–260 (CSSC). Positions 246-260 (CGNCGLGDAFRCSSC) are fe-S binding site B.

The protein belongs to the anamorsin family. In terms of assembly, monomer. Requires [2Fe-2S] cluster as cofactor. It depends on [4Fe-4S] cluster as a cofactor.

It is found in the cytoplasm. The protein resides in the mitochondrion intermembrane space. In terms of biological role, component of the cytosolic iron-sulfur (Fe-S) protein assembly (CIA) machinery. Required for the maturation of extramitochondrial Fe-S proteins. Part of an electron transfer chain functioning in an early step of cytosolic Fe-S biogenesis, facilitating the de novo assembly of a [4Fe-4S] cluster on the cytosolic Fe-S scaffold complex. Electrons are transferred from NADPH via a FAD- and FMN-containing diflavin oxidoreductase. Together with the diflavin oxidoreductase, also required for the assembly of the diferric tyrosyl radical cofactor of ribonucleotide reductase (RNR), probably by providing electrons for reduction during radical cofactor maturation in the catalytic small subunit. This Picea sitchensis (Sitka spruce) protein is Anamorsin homolog 1.